The primary structure comprises 26 residues: Aldehyde dehydrogenase beta chain (26 aa).

Heterotrimer composed of an alpha, a beta and a gamma chain. FAD is required as a cofactor.

It catalyses the reaction an aldehyde + a quinone + H2O = a quinol + a carboxylate + H(+). The chain is Aldehyde dehydrogenase beta chain from Amycolatopsis methanolica.